A 178-amino-acid polypeptide reads, in one-letter code: Protamine-like protein (178 aa).

Disordered stretches follow at residues 1-27 and 77-178; these read PSTTSSKSPKRRAKSPRRKRTGPTVSD and SVVK…RAKK. 2 stretches are compositionally biased toward basic residues: residues 8-21 and 94-178; these read SPKRRAKSPRRKRT and PRRR…RAKK. One can recognise an H15 domain in the interval 21 to 89; it reads TGPTVSDLIL…KAKGFYKLNK (69 aa).

Male germ cells.

Its subcellular location is the nucleus. The protein localises to the chromosome. Functionally, replaces histones in the chromatin of sperm during the haploid phase of spermatogenesis. Compacts sperm DNA into a highly condensed, stable and inactive complex. The chain is Protamine-like protein from Mullus surmuletus (Striped red mullet).